The following is a 619-amino-acid chain: Mitochondrial Rho GTPase 1-A (619 aa).

Residues 1–593 (MRKDVRILLV…TQADLKNSTF (593 aa)) lie on the Cytoplasmic side of the membrane. A Miro 1 domain is found at 2–168 (RKDVRILLVG…FYYAQKAVLH (167 aa)). 5 residues coordinate GTP: K14, G16, K17, T18, and S19. T18 provides a ligand contact to Mg(2+). Residues P35 and D57 each coordinate Mg(2+). S59, N118, K119, D121, A149, and K150 together coordinate GTP. 2 EF-hand domains span residues 184 to 219 (SCIKALTRIFKISDLDNDGILNDNELNFFQRTCFNI) and 304 to 339 (NAYLFLQSVFDKHDKDRDCALSPDELKDLFKVFPYM). Ca(2+) is bound by residues D197, D199, D201, E208, D317, D319, D321, A323, and E328. The Miro 2 domain maps to 416-580 (RSVFRCNVLG…YTKLTTMAMY (165 aa)). GTP contacts are provided by R427, C429, G430, K431, S432, G433, K447, K529, D531, T559, and C560. R427 lines the Mg(2+) pocket. The chain crosses the membrane as a helical; Anchor for type IV membrane protein span at residues 594-616 (WLRASVGATVFAVLGFAMYKALL). The Mitochondrial intermembrane segment spans residues 617-619 (KQR).

Belongs to the mitochondrial Rho GTPase family. As to quaternary structure, homodimer.

It is found in the mitochondrion outer membrane. The enzyme catalyses GTP + H2O = GDP + phosphate + H(+). It catalyses the reaction ATP + H2O = ADP + phosphate + H(+). It carries out the reaction UTP + H2O = UDP + phosphate + H(+). In terms of biological role, atypical mitochondrial nucleoside-triphosphatase (NTPase) involved in mitochondrial trafficking. Probably involved in control of anterograde transport of mitochondria and their subcellular distribution. Can hydrolyze GTP, ATP and UTP. This Danio rerio (Zebrafish) protein is Mitochondrial Rho GTPase 1-A (rhot1a).